The sequence spans 713 residues: Pro-neuregulin-3, membrane-bound isoform (713 aa).

Residues 1–362 (MSEGAAGASP…MESEDVYQRQ (362 aa)) are Extracellular-facing. 3 disordered regions span residues 28 to 48 (AAAA…AAEP), 119 to 220 (SSFP…STQA), and 251 to 282 (AAAS…TTYS). Residues 34–44 (AGGGPDGGGEG) show a composition bias toward gly residues. Positions 127–148 (TTTTTTSTTSPATPSAGGAASS) are enriched in low complexity. The span at 149-163 (RTPNRISTRLTTITR) shows a compositional bias: polar residues. Composition is skewed to low complexity over residues 195–207 (STTA…STPG) and 254–274 (SSSS…STSP). Residues 288–331 (HFKPCRDKDLAYCLNDGECFVIETLTGSHKHCRCKEGYQGVRCD) enclose the EGF-like domain. 3 cysteine pairs are disulfide-bonded: cysteine 292-cysteine 306, cysteine 300-cysteine 319, and cysteine 321-cysteine 330. Residues 363–383 (VLSISCIIFGIVIVGMFCAAF) form a helical membrane-spanning segment. Residues 384–713 (YFKSKKQAKQ…EIQRDSVLTK (330 aa)) are Cytoplasmic-facing. The disordered stretch occupies residues 449–496 (SAPQSFPEVTSPDRGSQPIKHHSPGQRSGMLHRNTFRRAPPSPRSRLG).

The protein belongs to the neuregulin family. In terms of assembly, interacts with ERBB4. Proteolytic cleavage close to the plasma membrane on the external face leads to the release of the soluble growth factor form. In terms of processing, extensive glycosylation precedes the proteolytic cleavage. Expressed in sympathetic, motor, and sensory neurons.

Its subcellular location is the cell membrane. It localises to the secreted. Its function is as follows. Direct ligand for the ERBB4 tyrosine kinase receptor. Binding results in ligand-stimulated tyrosine phosphorylation and activation of the receptor. Does not bind to the EGF receptor, ERBB2 or ERBB3 receptors. The chain is Pro-neuregulin-3, membrane-bound isoform (Nrg3) from Mus musculus (Mouse).